The primary structure comprises 73 residues: Translation initiation factor IF-1 (73 aa).

Residues 1-73 (MAKKDGVIEI…TRGRIVYRYK (73 aa)) enclose the S1-like domain.

Belongs to the IF-1 family. As to quaternary structure, component of the 30S ribosomal translation pre-initiation complex which assembles on the 30S ribosome in the order IF-2 and IF-3, IF-1 and N-formylmethionyl-tRNA(fMet); mRNA recruitment can occur at any time during PIC assembly.

It localises to the cytoplasm. Its function is as follows. One of the essential components for the initiation of protein synthesis. Stabilizes the binding of IF-2 and IF-3 on the 30S subunit to which N-formylmethionyl-tRNA(fMet) subsequently binds. Helps modulate mRNA selection, yielding the 30S pre-initiation complex (PIC). Upon addition of the 50S ribosomal subunit IF-1, IF-2 and IF-3 are released leaving the mature 70S translation initiation complex. The polypeptide is Translation initiation factor IF-1 (Clavibacter michiganensis subsp. michiganensis (strain NCPPB 382)).